Here is a 360-residue protein sequence, read N- to C-terminus: Phosphoserine aminotransferase (360 aa).

Arginine 42 is a binding site for L-glutamate. Pyridoxal 5'-phosphate is bound by residues tryptophan 102, threonine 152, aspartate 171, and glutamine 194. Residue lysine 195 is modified to N6-(pyridoxal phosphate)lysine. Position 237–238 (237–238 (NT)) interacts with pyridoxal 5'-phosphate.

Belongs to the class-V pyridoxal-phosphate-dependent aminotransferase family. SerC subfamily. In terms of assembly, homodimer. It depends on pyridoxal 5'-phosphate as a cofactor.

It is found in the cytoplasm. It catalyses the reaction O-phospho-L-serine + 2-oxoglutarate = 3-phosphooxypyruvate + L-glutamate. The catalysed reaction is 4-(phosphooxy)-L-threonine + 2-oxoglutarate = (R)-3-hydroxy-2-oxo-4-phosphooxybutanoate + L-glutamate. The protein operates within amino-acid biosynthesis; L-serine biosynthesis; L-serine from 3-phospho-D-glycerate: step 2/3. Its pathway is cofactor biosynthesis; pyridoxine 5'-phosphate biosynthesis; pyridoxine 5'-phosphate from D-erythrose 4-phosphate: step 3/5. Its function is as follows. Catalyzes the reversible conversion of 3-phosphohydroxypyruvate to phosphoserine and of 3-hydroxy-2-oxo-4-phosphonooxybutanoate to phosphohydroxythreonine. In Coxiella burnetii (strain Dugway 5J108-111), this protein is Phosphoserine aminotransferase.